We begin with the raw amino-acid sequence, 440 residues long: Protein disulfide-isomerase A6 (440 aa).

An N-terminal signal peptide occupies residues 1 to 19 (MARLVLGLVSCTFFLAVSG). 2 Thioredoxin domains span residues 20–133 (LYSS…ALRQ) and 151–287 (QGRG…EDIA). Cysteine 55 and cysteine 58 are oxidised to a cystine. Serine 129, serine 156, and serine 158 each carry phosphoserine. The interval 139-161 (LGGRSGGYSSGKQGRGDSSSKKD) is disordered. The segment covering 152–161 (GRGDSSSKKD) has biased composition (basic and acidic residues). A disulfide bridge connects residues cysteine 190 and cysteine 193. The disordered stretch occupies residues 399 to 440 (GGGSFPTITPREPWDGKDGELPVEDDIDLSDVELDDLEKDEL). The span at 419-440 (LPVEDDIDLSDVELDDLEKDEL) shows a compositional bias: acidic residues. The residue at position 428 (serine 428) is a Phosphoserine. Positions 437–440 (KDEL) match the Prevents secretion from ER motif.

Belongs to the protein disulfide isomerase family. Part of a large chaperone multiprotein complex comprising DNAJB11, HSP90B1, HSPA5, HYOU, PDIA2, PDIA4, PDIA6, PPIB, SDF2L1, UGGT1 and very small amounts of ERP29, but not, or at very low levels, CALR nor CANX. Interacts with MICA on the surface of tumor cells, leading to MICA disulfide bond reduction which is required for its release from tumor cells. Interacts with ITGB3 following platelet stimulation. Interacts with ERN1; the interaction is direct. Interacts with EIF2AK3.

It localises to the endoplasmic reticulum lumen. The protein localises to the cell membrane. Its subcellular location is the melanosome. It catalyses the reaction Catalyzes the rearrangement of -S-S- bonds in proteins.. Functionally, may function as a chaperone that inhibits aggregation of misfolded proteins. Negatively regulates the unfolded protein response (UPR) through binding to UPR sensors such as ERN1, which in turn inactivates ERN1 signaling. May also regulate the UPR via the EIF2AK3 UPR sensor. Plays a role in platelet aggregation and activation by agonists such as convulxin, collagen and thrombin. This Mus musculus (Mouse) protein is Protein disulfide-isomerase A6 (Pdia6).